The sequence spans 339 residues: Protein FAM76B (339 aa).

The residue at position 2 (Ala-2) is an N-acetylalanine. Ser-22 and Ser-148 each carry phosphoserine. Positions 144–243 (EQRKSLGSSH…INQSADSGGT (100 aa)) are disordered. Residues 148-160 (SLGSSHSNSSSSS) show a composition bias toward low complexity. Positions 167–189 (HHSKHHHHHHHHHHRHSSGHHKV) are enriched in basic residues. Phosphoserine is present on Ser-193. Thr-215 bears the Phosphothreonine mark. Residues 215–224 (TPKKKPKLES) are compositionally biased toward basic and acidic residues. A compositionally biased stretch (polar residues) spans 228-243 (NGDSSSINQSADSGGT). A coiled-coil region spans residues 248–328 (LISQLKEEVM…QVAALSKGKK (81 aa)).

Belongs to the FAM76 family. As to quaternary structure, interacts with HNRNPA2B1 (via C-terminus); the interaction results in retention of HNRNPA2B1 in the nucleus and inhibition of the NF-kappa-B-mediated inflammatory pathway.

It localises to the nucleus speckle. Its function is as follows. Negatively regulates the NF-kappa-B-mediated inflammatory pathway by preventing the translocation of HNRNPA2B1 from the nucleus to the cytoplasm. Inhibits the PI3K/Akt/NF-kappa-B pathway-mediated polarization of M1 macrophages by binding to and stabilizing PIK3CD mRNA, resulting in increased levels of PIK3CD protein and increased levels of phosphorylated downstream target AKT which leads to decreased NF-kappa-B signaling. The polypeptide is Protein FAM76B (Fam76b) (Mus musculus (Mouse)).